We begin with the raw amino-acid sequence, 1570 residues long: Mediator of RNA polymerase II transcription subunit 1 (1570 aa).

2 short sequence motifs (LXXLL motif) span residues 585–589 and 626–630; these read LTSLL and LMNLL. 3 disordered regions span residues 592 to 687, 771 to 880, and 922 to 1561; these read TNNT…TEDD, SKLS…FKDF, and SKTL…MDDD. Residues 675 to 687 are compositionally biased toward basic and acidic residues; that stretch reads TGAEKMKNQTEDD. Polar residues-rich tracts occupy residues 788–801, 832–861, and 931–942; these read RDSS…STLF, GSPN…QSGF, and QETQSRSQSPLL. Over residues 946-958 the composition is skewed to basic and acidic residues; the sequence is LGKDRPQKQKVKE. Over residues 961–970 the composition is skewed to gly residues; the sequence is NGGGAGGGLS. Composition is skewed to low complexity over residues 1022-1035, 1066-1082, 1089-1113, 1121-1140, and 1152-1161; these read PTST…GTSG, SSHG…SSSS, SSLS…MKIG, SGQS…SMGK, and SSNVSNSSGS. The span at 1173–1190 shows a compositional bias: polar residues; it reads MNPSLSKPNISPSHSRPS. The segment covering 1217–1228 has biased composition (gly residues); the sequence is GSGGQHLSGGGS. Residues 1229-1271 show a composition bias toward low complexity; that stretch reads NSTTKSSSGLVSSGSLSQKPNSSSSSSSSSSSSSSSSSSSSSS. Positions 1276–1287 are enriched in polar residues; that stretch reads VSQNLHGNSKGK. The span at 1308-1328 shows a compositional bias: gly residues; sequence VGTGGPGSEDPMDGGGGGGST. Positions 1347–1359 are enriched in basic and acidic residues; sequence PTKREKSEKDKSK. Composition is skewed to polar residues over residues 1418-1433 and 1441-1455; these read SQMQ…SGST and PSHN…QALD. Over residues 1459–1469 the composition is skewed to low complexity; it reads ESGSSSIAEKS. Residues 1494–1503 show a composition bias toward basic residues; the sequence is KHKKHKKEKK. The span at 1504–1516 shows a compositional bias: basic and acidic residues; that stretch reads RLKDKDRDREKKK. The segment covering 1536–1546 has biased composition (low complexity); it reads MAMSGGSMMSS.

The protein belongs to the Mediator complex subunit 1 family. Component of the Mediator complex.

The protein resides in the nucleus. In terms of biological role, component of the Mediator complex, a coactivator involved in the regulated transcription of nearly all RNA polymerase II-dependent genes. Mediator functions as a bridge to convey information from gene-specific regulatory proteins to the basal RNA polymerase II transcription machinery. Mediator is recruited to promoters by direct interactions with regulatory proteins and serves as a scaffold for the assembly of a functional preinitiation complex with RNA polymerase II and the general transcription factors. The polypeptide is Mediator of RNA polymerase II transcription subunit 1 (med1) (Xenopus laevis (African clawed frog)).